The primary structure comprises 212 residues: Uracil phosphoribosyltransferase (212 aa).

5-phospho-alpha-D-ribose 1-diphosphate-binding positions include R78, R103, and 130–138 (DPMLATGGS). Residues I193 and 198-200 (GDA) each bind uracil. D199 provides a ligand contact to 5-phospho-alpha-D-ribose 1-diphosphate.

It belongs to the UPRTase family. Mg(2+) is required as a cofactor.

The enzyme catalyses UMP + diphosphate = 5-phospho-alpha-D-ribose 1-diphosphate + uracil. It participates in pyrimidine metabolism; UMP biosynthesis via salvage pathway; UMP from uracil: step 1/1. Allosterically activated by GTP. Functionally, catalyzes the conversion of uracil and 5-phospho-alpha-D-ribose 1-diphosphate (PRPP) to UMP and diphosphate. This Bordetella petrii (strain ATCC BAA-461 / DSM 12804 / CCUG 43448) protein is Uracil phosphoribosyltransferase.